We begin with the raw amino-acid sequence, 242 residues long: Probable transcriptional regulatory protein Bphyt_1301 (242 aa).

This sequence belongs to the TACO1 family.

It is found in the cytoplasm. The polypeptide is Probable transcriptional regulatory protein Bphyt_1301 (Paraburkholderia phytofirmans (strain DSM 17436 / LMG 22146 / PsJN) (Burkholderia phytofirmans)).